Reading from the N-terminus, the 536-residue chain is Chaperonin GroEL 1 (536 aa).

ATP is bound by residues 29-32 (TLGP), 86-90 (DGTTT), Gly413, 476-478 (NAA), and Asp492.

Belongs to the chaperonin (HSP60) family. As to quaternary structure, forms a cylinder of 14 subunits composed of two heptameric rings stacked back-to-back. Interacts with the co-chaperonin GroES.

The protein resides in the cytoplasm. The catalysed reaction is ATP + H2O + a folded polypeptide = ADP + phosphate + an unfolded polypeptide.. Together with its co-chaperonin GroES, plays an essential role in assisting protein folding. The GroEL-GroES system forms a nano-cage that allows encapsulation of the non-native substrate proteins and provides a physical environment optimized to promote and accelerate protein folding. The protein is Chaperonin GroEL 1 of Nocardia farcinica (strain IFM 10152).